Reading from the N-terminus, the 83-residue chain is MKTVFAILFLAFIALTYARSYEDVKEEIKNEVEKEILEDLEKETDELNERKINDAKPWRWVRDIRWRKLVPFIPVVVAAVGKK.

The signal sequence occupies residues 1–18; sequence MKTVFAILFLAFIALTYA. Residues 19-55 constitute a propeptide that is removed on maturation; sequence RSYEDVKEEIKNEVEKEILEDLEKETDELNERKINDA. Val80 carries the post-translational modification Valine amide.

Belongs to the arminin family. Expressed in entodermal epithelium along the body column.

The protein resides in the secreted. The protein localises to the target cell membrane. In terms of biological role, antimicrobial peptide with a broad-spectrum antimicrobial activity. Keeps its antibacterial activity under a wide range of salt concentrations that mimic physiological conditions of human blood, which is surprising, since Hydra is an obligate freshwater animal with nearly no salt tolerance. Does not affect red blood cells. The polypeptide is Arminin 4364 (Hydra vulgaris (Hydra)).